Consider the following 102-residue polypeptide: Small ribosomal subunit protein uS10 (102 aa).

This sequence belongs to the universal ribosomal protein uS10 family. Part of the 30S ribosomal subunit.

Its function is as follows. Involved in the binding of tRNA to the ribosomes. In Sulfolobus acidocaldarius (strain ATCC 33909 / DSM 639 / JCM 8929 / NBRC 15157 / NCIMB 11770), this protein is Small ribosomal subunit protein uS10.